We begin with the raw amino-acid sequence, 73 residues long: Translation initiation factor IF-1 1 (73 aa).

The S1-like domain maps to 1–72 (MAKEELIEFG…TKGRINFRHK (72 aa)).

Belongs to the IF-1 family. Component of the 30S ribosomal translation pre-initiation complex which assembles on the 30S ribosome in the order IF-2 and IF-3, IF-1 and N-formylmethionyl-tRNA(fMet); mRNA recruitment can occur at any time during PIC assembly.

The protein resides in the cytoplasm. Its function is as follows. One of the essential components for the initiation of protein synthesis. Stabilizes the binding of IF-2 and IF-3 on the 30S subunit to which N-formylmethionyl-tRNA(fMet) subsequently binds. Helps modulate mRNA selection, yielding the 30S pre-initiation complex (PIC). Upon addition of the 50S ribosomal subunit IF-1, IF-2 and IF-3 are released leaving the mature 70S translation initiation complex. The sequence is that of Translation initiation factor IF-1 1 from Cupriavidus metallidurans (strain ATCC 43123 / DSM 2839 / NBRC 102507 / CH34) (Ralstonia metallidurans).